The following is a 241-amino-acid chain: Putative inactive serine protease 58 (241 aa).

The N-terminal stretch at 1–17 (MKLAFLCILSTLLRTFA) is a signal peptide. The Peptidase S1 domain occupies 18 to 239 (YNPDHIAGTT…YLPWIEDTMK (222 aa)). A disulfide bridge links Cys-41 with Cys-57. Active-site charge relay system residues include His-56 and Asp-101. 3 disulfides stabilise this stretch: Cys-133–Cys-201, Cys-165–Cys-180, and Cys-191–Cys-215. An N-linked (GlcNAc...) asparagine glycan is attached at Asn-156.

It belongs to the peptidase S1 family.

The protein localises to the secreted. It catalyses the reaction Preferential cleavage: Arg-|-Xaa, Lys-|-Xaa.. The polypeptide is Putative inactive serine protease 58 (Prss58) (Mus musculus (Mouse)).